Consider the following 1493-residue polypeptide: Mitogen-activated protein kinase kinase kinase 1 (1493 aa).

Composition is skewed to low complexity over residues 1 to 23 and 33 to 42; these read MAAAAGDRASSSGFPGAAAASPE and GSGAPAAGAG. 2 disordered regions span residues 1–171 and 222–295; these read MAAA…DRPE and LQGE…EETS. Position 2 is an N-acetylalanine (Ala-2). Ser-21 carries the post-translational modification Phosphoserine. Over residues 84-94 the composition is skewed to pro residues; the sequence is PPCPSTSPSPE. 2 stretches are compositionally biased toward low complexity: residues 95-108 and 135-151; these read PADAAAGASGFQPA and ARSPAGAEPPSAAAPSG. At Ser-137 the chain carries Phosphoserine. The segment covering 152-171 has biased composition (basic and acidic residues); sequence REMENKETLKGLHKMDDRPE. A compositionally biased stretch (low complexity) spans 230-257; it reads SAAPAPKGRRSPSPGSSPSGRSGKPESP. Position 265 is a phosphoserine (Ser-265). Thr-275 carries the phosphothreonine modification. Phosphoserine is present on residues Ser-282, Ser-287, and Ser-290. Residues 328-356 form an SWIM-type zinc finger; it reads YRVFIGPQNCSCGRGTFCIHLLFVMLRVF. The RING-type zinc finger occupies 433–482; it reads CPICLLGMLDEESLTVCEDGCRNKLHHHCMSIWAEECRRNREPLICPLCR. The span at 496-506 shows a compositional bias: polar residues; that stretch reads SSPVDSPTSLR. Disordered stretches follow at residues 496–524, 866–910, 923–955, and 992–1060; these read SSPVDSPTSLRGVQQPSSPQQPVAGSQRR, DTLD…LSAS, VGLPSSATTEQPKPTVQTKGRPHSQCLNSSPLS, and PCKI…ASKN. Ser-497, Ser-521, and Ser-910 each carry phosphoserine. Residues 507 to 522 are compositionally biased toward low complexity; that stretch reads GVQQPSSPQQPVAGSQ. 2 stretches are compositionally biased toward polar residues: residues 925-940 and 998-1014; these read LPSSATTEQPKPTVQT and ASPQTQRKFSLQFQRTC. Residues Ser-999 and Ser-1024 each carry the phosphoserine modification. Positions 1049–1060 are enriched in polar residues; the sequence is GSTSKLGDASKN. A Protein kinase domain is found at 1224-1489; it reads WLKGQQIGLG…SRELLKHPVF (266 aa). ATP-binding positions include 1230–1238 and Lys-1253; that span reads IGLGAFSSC. The active-site Proton acceptor is the Asp-1350. Thr-1381 and Thr-1393 each carry phosphothreonine; by autocatalysis.

It belongs to the protein kinase superfamily. STE Ser/Thr protein kinase family. MAP kinase kinase kinase subfamily. In terms of assembly, binds both upstream activators and downstream substrates in multimolecular complexes through its N-terminus. Oligomerizes after binding MAP4K2 or TRAF2. Interacts (via the kinase catalytic domain) with STK38. Interacts with GRIPAP1. It depends on Mg(2+) as a cofactor. Autophosphorylated. As to expression, most highly expressed in spleen, kidney and lung.

It is found in the membrane. The enzyme catalyses L-seryl-[protein] + ATP = O-phospho-L-seryl-[protein] + ADP + H(+). The catalysed reaction is L-threonyl-[protein] + ATP = O-phospho-L-threonyl-[protein] + ADP + H(+). Its activity is regulated as follows. Activated by autophosphorylation on Thr-1381 and Thr-1393 following oligomerization. Functionally, component of a protein kinase signal transduction cascade. Activates the ERK and JNK kinase pathways by phosphorylation of MAP2K1 and MAP2K4. May phosphorylate the MAPK8/JNK1 kinase. Activates CHUK and IKBKB, the central protein kinases of the NF-kappa-B pathway. This chain is Mitogen-activated protein kinase kinase kinase 1 (Map3k1), found in Rattus norvegicus (Rat).